Consider the following 652-residue polypeptide: ATP-binding cassette sub-family G member 5 (652 aa).

Positions M1–V30 are disordered. Residues M1 to K384 lie on the Cytoplasmic side of the membrane. The span at N18–V30 shows a compositional bias: polar residues. The 256-residue stretch at L39–E294 folds into the ABC transporter domain. G87–T94 is an ATP binding site. A helical transmembrane segment spans residues Q385–L405. Residues M389–R646 form the ABC transmembrane type-2 domain. Topologically, residues L406 to G422 are extracellular. A helical membrane pass occupies residues L423–F443. The Cytoplasmic portion of the chain corresponds to P444–Y468. A helical membrane pass occupies residues V469 to T490. Residues L491–G501 are Extracellular-facing. Residues Y502 to L522 traverse the membrane as a helical segment. At G523–N529 the chain is on the cytoplasmic side. The helical transmembrane segment at I530–I550 threads the bilayer. Topologically, residues R551 to N624 are extracellular. N-linked (GlcNAc...) asparagine glycans are attached at residues N585 and N592. Residues F625–V645 form a helical membrane-spanning segment. Residues R646 to R652 lie on the Cytoplasmic side of the membrane.

It belongs to the ABC transporter superfamily. ABCG family. Eye pigment precursor importer (TC 3.A.1.204) subfamily. Heterodimer with ABCG8. The cofactor is Mg(2+). N-glycosylated. N-glycosylation is important for efficient export out of the endoplasmic reticulum. As to expression, detected in liver (at protein level). Expressed only in liver and intestine.

Its subcellular location is the cell membrane. The protein localises to the apical cell membrane. The catalysed reaction is cholesterol(in) + ATP + H2O = cholesterol(out) + ADP + phosphate + H(+). It carries out the reaction sitosterol(in) + ATP + H2O = sitosterol(out) + ADP + phosphate + H(+). Functionally, ABCG5 and ABCG8 form an obligate heterodimer that mediates Mg(2+)- and ATP-dependent sterol transport across the cell membrane. Plays an essential role in the selective transport of dietary plant sterols and cholesterol in and out of the enterocytes and in the selective sterol excretion by the liver into bile. Required for normal sterol homeostasis. The heterodimer with ABCG8 has ATPase activity. This Rattus norvegicus (Rat) protein is ATP-binding cassette sub-family G member 5.